A 1078-amino-acid chain; its full sequence is Isoleucine--tRNA ligase (1078 aa).

The short motif at 52–62 (PTANGKPALHH) is the 'HIGH' region element. The 'KMSKS' region motif lies at 637–641 (KMSKS). K640 lines the ATP pocket.

Belongs to the class-I aminoacyl-tRNA synthetase family. IleS type 2 subfamily. Monomer. Requires Zn(2+) as cofactor.

It localises to the cytoplasm. It carries out the reaction tRNA(Ile) + L-isoleucine + ATP = L-isoleucyl-tRNA(Ile) + AMP + diphosphate. In terms of biological role, catalyzes the attachment of isoleucine to tRNA(Ile). As IleRS can inadvertently accommodate and process structurally similar amino acids such as valine, to avoid such errors it has two additional distinct tRNA(Ile)-dependent editing activities. One activity is designated as 'pretransfer' editing and involves the hydrolysis of activated Val-AMP. The other activity is designated 'posttransfer' editing and involves deacylation of mischarged Val-tRNA(Ile). The sequence is that of Isoleucine--tRNA ligase from Deinococcus radiodurans (strain ATCC 13939 / DSM 20539 / JCM 16871 / CCUG 27074 / LMG 4051 / NBRC 15346 / NCIMB 9279 / VKM B-1422 / R1).